A 378-amino-acid chain; its full sequence is Sterol 24-C-methyltransferase erg6 (378 aa).

This sequence belongs to the class I-like SAM-binding methyltransferase superfamily. Erg6/SMT family.

The protein localises to the nucleus. The protein resides in the endoplasmic reticulum. The catalysed reaction is zymosterol + S-adenosyl-L-methionine = fecosterol + S-adenosyl-L-homocysteine + H(+). It catalyses the reaction lanosterol + S-adenosyl-L-methionine = eburicol + S-adenosyl-L-homocysteine + H(+). It functions in the pathway steroid metabolism; ergosterol biosynthesis. Its function is as follows. Sterol 24-C-methyltransferase; part of the third module of ergosterol biosynthesis pathway that includes by the late steps of the pathway. Erg6 catalyzes the methyl transfer from S-adenosyl-methionine to the C-24 of zymosterol to form fecosterol. The third module or late pathway involves the ergosterol synthesis itself through consecutive reactions that mainly occur in the endoplasmic reticulum (ER) membrane. Firstly, the squalene synthase erg9 catalyzes the condensation of 2 farnesyl pyrophosphate moieties to form squalene, which is the precursor of all steroids. Secondly, squalene is converted into lanosterol by the consecutive action of the squalene epoxidase erg1 and the lanosterol synthase erg7. The lanosterol 14-alpha-demethylase erg11/cyp1 catalyzes C14-demethylation of lanosterol to produce 4,4'-dimethyl cholesta-8,14,24-triene-3-beta-ol. In the next steps, a complex process involving various demethylation, reduction and desaturation reactions catalyzed by the C-14 reductase erg24 and the C-4 demethylation complex erg25-erg26-erg27 leads to the production of zymosterol. Erg28 likely functions in the C-4 demethylation complex reaction by tethering erg26 and Erg27 to the endoplasmic reticulum or to facilitate interaction between these proteins. Then, the sterol 24-C-methyltransferase erg6 catalyzes the methyl transfer from S-adenosyl-methionine to the C-24 of zymosterol to form fecosterol. The C-8 sterol isomerase erg2 catalyzes the reaction which results in unsaturation at C-7 in the B ring of sterols and thus converts fecosterol to episterol. The sterol-C5-desaturases erg31 and erg32 then catalyze the introduction of a C-5 double bond in the B ring to produce 5-dehydroepisterol. The C-22 sterol desaturase erg5 further converts 5-dehydroepisterol into ergosta-5,7,22,24(28)-tetraen-3beta-ol by forming the C-22(23) double bond in the sterol side chain. Finally, ergosta-5,7,22,24(28)-tetraen-3beta-ol is substrate of the C-24(28) sterol reductase erg4 to produce ergosterol. In the genus Schizosaccharomyces, a second route exists between lanosterol and fecosterol, via the methylation of lanosterol to eburicol by erg6, followed by C14-demethylation by erg11/cyp1 and C4-demethylation by the demethylation complex erg25-erg26-erg27. This Schizosaccharomyces pombe (strain 972 / ATCC 24843) (Fission yeast) protein is Sterol 24-C-methyltransferase erg6.